Reading from the N-terminus, the 287-residue chain is Probable endoribonuclease YicC (287 aa).

This sequence belongs to the YicC/YloC family. A divalent metal cation serves as cofactor.

Functionally, probably a ssRNA endonuclease. In terms of biological role, might contribute to small RNA (sRNA) regulation. This is Probable endoribonuclease YicC from Salmonella typhimurium (strain LT2 / SGSC1412 / ATCC 700720).